Consider the following 518-residue polypeptide: Protein nucleotidyltransferase YdiU (518 aa).

ATP is bound by residues Gly100, Gly102, Arg103, Lys123, Asp135, Gly136, Arg193, and Arg200. The active-site Proton acceptor is Asp270. Mg(2+)-binding residues include Asn271 and Asp280. Asp280 is a binding site for ATP.

This sequence belongs to the SELO family. Requires Mg(2+) as cofactor. The cofactor is Mn(2+).

It carries out the reaction L-seryl-[protein] + ATP = 3-O-(5'-adenylyl)-L-seryl-[protein] + diphosphate. The enzyme catalyses L-threonyl-[protein] + ATP = 3-O-(5'-adenylyl)-L-threonyl-[protein] + diphosphate. The catalysed reaction is L-tyrosyl-[protein] + ATP = O-(5'-adenylyl)-L-tyrosyl-[protein] + diphosphate. It catalyses the reaction L-histidyl-[protein] + UTP = N(tele)-(5'-uridylyl)-L-histidyl-[protein] + diphosphate. It carries out the reaction L-seryl-[protein] + UTP = O-(5'-uridylyl)-L-seryl-[protein] + diphosphate. The enzyme catalyses L-tyrosyl-[protein] + UTP = O-(5'-uridylyl)-L-tyrosyl-[protein] + diphosphate. Functionally, nucleotidyltransferase involved in the post-translational modification of proteins. It can catalyze the addition of adenosine monophosphate (AMP) or uridine monophosphate (UMP) to a protein, resulting in modifications known as AMPylation and UMPylation. This is Protein nucleotidyltransferase YdiU from Xanthomonas oryzae pv. oryzae (strain MAFF 311018).